Consider the following 554-residue polypeptide: Folate synthesis bifunctional protein, mitochondrial (554 aa).

The transit peptide at 1-42 (MAPLLSQTLIHTGRFLLRRFLEPPPAVISAVAASRVCFHRYY) directs the protein to the mitochondrion. The tract at residues 90–215 (VIALGSNIGN…SFVLAPLVDL (126 aa)) is HPPK. Residues 273-541 (THVMGILNLT…NVRHNADAAK (269 aa)) enclose the Pterin-binding domain. Positions 275-554 (VMGILNLTPD…AMLRRRRSKG (280 aa)) are DHPS. N280 provides a ligand contact to Mg(2+). Residues T320, D357, N376, D449, K494, and 529–531 (RVH) contribute to the (7,8-dihydropterin-6-yl)methyl diphosphate site.

The protein in the N-terminal section; belongs to the HPPK family. In the C-terminal section; belongs to the DHPS family. The cofactor is Mg(2+). In terms of tissue distribution, ubiquitous.

It is found in the mitochondrion. It catalyses the reaction 6-hydroxymethyl-7,8-dihydropterin + ATP = (7,8-dihydropterin-6-yl)methyl diphosphate + AMP + H(+). The enzyme catalyses (7,8-dihydropterin-6-yl)methyl diphosphate + 4-aminobenzoate = 7,8-dihydropteroate + diphosphate. The protein operates within cofactor biosynthesis; tetrahydrofolate biosynthesis; 2-amino-4-hydroxy-6-hydroxymethyl-7,8-dihydropteridine diphosphate from 7,8-dihydroneopterin triphosphate: step 4/4. It participates in cofactor biosynthesis; tetrahydrofolate biosynthesis; 7,8-dihydrofolate from 2-amino-4-hydroxy-6-hydroxymethyl-7,8-dihydropteridine diphosphate and 4-aminobenzoate: step 1/2. Catalyzes the first two consecutive steps of tetrahydrofolate biosynthesis. In Arabidopsis thaliana (Mouse-ear cress), this protein is Folate synthesis bifunctional protein, mitochondrial.